The following is a 254-amino-acid chain: Ubiquinone biosynthesis O-methyltransferase (254 aa).

Residues Arg-47, Gly-78, Asp-99, and Met-141 each contribute to the S-adenosyl-L-methionine site.

It belongs to the methyltransferase superfamily. UbiG/COQ3 family.

The enzyme catalyses a 3-demethylubiquinol + S-adenosyl-L-methionine = a ubiquinol + S-adenosyl-L-homocysteine + H(+). It carries out the reaction a 3-(all-trans-polyprenyl)benzene-1,2-diol + S-adenosyl-L-methionine = a 2-methoxy-6-(all-trans-polyprenyl)phenol + S-adenosyl-L-homocysteine + H(+). It participates in cofactor biosynthesis; ubiquinone biosynthesis. Its function is as follows. O-methyltransferase that catalyzes the 2 O-methylation steps in the ubiquinone biosynthetic pathway. The protein is Ubiquinone biosynthesis O-methyltransferase of Rhodopseudomonas palustris (strain BisB18).